Here is a 351-residue protein sequence, read N- to C-terminus: UDP-N-acetylenolpyruvoylglucosamine reductase (351 aa).

One can recognise an FAD-binding PCMH-type domain in the interval 11-213 (GVGGSIACFI…KQVRDQVLRI (203 aa)). Residue Arg158 is part of the active site. The Proton donor role is filled by Ser239. Glu343 is an active-site residue.

Belongs to the MurB family. Requires FAD as cofactor.

The protein resides in the cytoplasm. It carries out the reaction UDP-N-acetyl-alpha-D-muramate + NADP(+) = UDP-N-acetyl-3-O-(1-carboxyvinyl)-alpha-D-glucosamine + NADPH + H(+). Its pathway is cell wall biogenesis; peptidoglycan biosynthesis. Cell wall formation. In Tropheryma whipplei (strain TW08/27) (Whipple's bacillus), this protein is UDP-N-acetylenolpyruvoylglucosamine reductase.